We begin with the raw amino-acid sequence, 2575 residues long: Non-reducing polyketide synthase pks11 (2575 aa).

The region spanning 89 to 228 (LANIILSPLV…ASKTVSTLQG (140 aa)) is the Starter acyltransferase (SAT) domain. Residue Cys129 is the Nucleophile; for transacylase activity of the active site. The active-site Proton donor/acceptor; for transacylase activity is the His247. The 418-residue stretch at 373–790 (EDDIAVVGMS…GSNASAVVTE (418 aa)) folds into the Ketosynthase family 3 (KS3) domain. Active-site for beta-ketoacyl synthase activity residues include Cys538, His673, and His713. Residues 901–1192 (FGGQISTYVG…TNMASRALGS (292 aa)) form the Malonyl-CoA:ACP transacylase (MAT) domain. Positions 1276-1409 (PKGLWSFIDY…GQIIFVSTDN (134 aa)) are N-terminal hotdog fold. Positions 1276–1586 (PKGLWSFIDY…YHKVAKATMS (311 aa)) constitute a PKS/mFAS DH domain. Residues 1307–1584 (LVSGHIIAQT…VNYHKVAKAT (278 aa)) are product template (PT) domain. The Proton acceptor; for dehydratase activity role is filled by His1311. The interval 1437–1586 (ADDIIQGRNI…YHKVAKATMS (150 aa)) is C-terminal hotdog fold. The Proton donor; for dehydratase activity role is filled by Asp1493. Polar residues predominate over residues 1597-1606 (TTSTSTNVKS). Positions 1597–1636 (TTSTSTNVKSSPAAAEGSSPVENGASGSGSKAKKTKSGAG) are disordered. The 75-residue stretch at 1637 to 1711 (QDVVNKTKGL…GLVQIIKSTL (75 aa)) folds into the Carrier domain. Ser1671 bears the O-(pantetheine 4'-phosphoryl)serine mark. Residues 1713–1762 (VSDDEEGSDQEGSEASSSESSTTFTPSTTATTVSDVEDNGNEKSIGKEKS) are disordered. Positions 1714–1724 (SDDEEGSDQEG) are enriched in acidic residues. Residues 1725 to 1746 (SEASSSESSTTFTPSTTATTVS) show a composition bias toward low complexity. The segment covering 1752–1762 (GNEKSIGKEKS) has biased composition (basic and acidic residues). The segment at 1835–2130 (LTRIPHDPQH…HIDWTDGNSP (296 aa)) is methyltransferase domain. The region spanning 2204–2448 (ITGATGSLGS…LCWTPVDDVA (245 aa)) is the Thioester reductase (TE) domain.

Pantetheine 4'-phosphate serves as cofactor.

It functions in the pathway secondary metabolite biosynthesis. Functionally, non-reducing polyketide synthase; part of the gene cluster that mediates the biosynthesis of mitorubrinol and mitorubrinic acid, two virulence factors that improve T.marneffei intracellular survival in macrophages. The two polyketide synthases pks12 and pks11 are probably responsible for sequential use in the biosynthesis of mitorubrinol and mitorubrinic acid. The first part of the biosynthesis is probably catalyzed by pks12, which synthesized orsellinic acid. This tetraketide is then used as a starter unit for pks11, which possesses a SAT domain, in the second part of the biosynthesis. Pks11, contains a methyltransferase domain, also served that methylates the products, using a methyl group from S-adenosylmethionine. This Talaromyces marneffei (Penicillium marneffei) protein is Non-reducing polyketide synthase pks11.